A 171-amino-acid chain; its full sequence is MANPKNTESLAELKNRFADIDSVFVTEYRGLTVAQITELRRALGSDVQYSVAKNTLIKLAAKEAGIEGLDDILTGPTAVAFIKGEAVDAAKAMKKFASENKAFVIKGGYMDGNALSAAQVDAIAELDNRETTLAKLAGAMKGNLAKAAGLFNAPASQVARLGAALQEKKEA.

This sequence belongs to the universal ribosomal protein uL10 family. Part of the ribosomal stalk of the 50S ribosomal subunit. The N-terminus interacts with L11 and the large rRNA to form the base of the stalk. The C-terminus forms an elongated spine to which L12 dimers bind in a sequential fashion forming a multimeric L10(L12)X complex.

Functionally, forms part of the ribosomal stalk, playing a central role in the interaction of the ribosome with GTP-bound translation factors. The sequence is that of Large ribosomal subunit protein uL10 from Corynebacterium diphtheriae (strain ATCC 700971 / NCTC 13129 / Biotype gravis).